Reading from the N-terminus, the 136-residue chain is Glutamyl-tRNA(Gln) amidotransferase subunit C, mitochondrial (136 aa).

The N-terminal 27 residues, Met1–Gln27, are a transit peptide targeting the mitochondrion.

This sequence belongs to the GatC family. Subunit of the heterotrimeric GatCAB amidotransferase (AdT) complex, composed of A (QRSL1), B (GATB) and C (GATC) subunits.

Its subcellular location is the mitochondrion. It carries out the reaction L-glutamyl-tRNA(Gln) + L-glutamine + ATP + H2O = L-glutaminyl-tRNA(Gln) + L-glutamate + ADP + phosphate + H(+). In terms of biological role, allows the formation of correctly charged Gln-tRNA(Gln) through the transamidation of misacylated Glu-tRNA(Gln) in the mitochondria. The reaction takes place in the presence of glutamine and ATP through an activated gamma-phospho-Glu-tRNA(Gln). This is Glutamyl-tRNA(Gln) amidotransferase subunit C, mitochondrial from Bos taurus (Bovine).